The primary structure comprises 108 residues: Protein RnfH (108 aa).

This sequence belongs to the UPF0125 (RnfH) family.

The sequence is that of Protein RnfH from Laribacter hongkongensis (strain HLHK9).